Reading from the N-terminus, the 157-residue chain is UPF0254 protein MTH_1148 (157 aa).

The protein belongs to the UPF0254 family.

This is UPF0254 protein MTH_1148 from Methanothermobacter thermautotrophicus (strain ATCC 29096 / DSM 1053 / JCM 10044 / NBRC 100330 / Delta H) (Methanobacterium thermoautotrophicum).